The primary structure comprises 183 residues: Translation initiation factor IF-3 (183 aa).

The protein belongs to the IF-3 family. As to quaternary structure, monomer.

It localises to the cytoplasm. Functionally, IF-3 binds to the 30S ribosomal subunit and shifts the equilibrium between 70S ribosomes and their 50S and 30S subunits in favor of the free subunits, thus enhancing the availability of 30S subunits on which protein synthesis initiation begins. This Yersinia enterocolitica serotype O:8 / biotype 1B (strain NCTC 13174 / 8081) protein is Translation initiation factor IF-3.